The following is a 376-amino-acid chain: 1-deoxy-D-xylulose 5-phosphate reductoisomerase (376 aa).

The NADPH site is built by threonine 12, glycine 13, serine 14, isoleucine 15, arginine 39, glutamine 40, and asparagine 110. Lysine 111 is a binding site for 1-deoxy-D-xylulose 5-phosphate. Glutamate 112 contributes to the NADPH binding site. Aspartate 136 serves as a coordination point for Mn(2+). 1-deoxy-D-xylulose 5-phosphate is bound by residues serine 137, glutamate 138, serine 162, and histidine 185. Glutamate 138 provides a ligand contact to Mn(2+). Glycine 191 contributes to the NADPH binding site. 4 residues coordinate 1-deoxy-D-xylulose 5-phosphate: serine 198, asparagine 203, lysine 204, and glutamate 207. Glutamate 207 contacts Mn(2+).

The protein belongs to the DXR family. Mg(2+) serves as cofactor. It depends on Mn(2+) as a cofactor.

It carries out the reaction 2-C-methyl-D-erythritol 4-phosphate + NADP(+) = 1-deoxy-D-xylulose 5-phosphate + NADPH + H(+). It participates in isoprenoid biosynthesis; isopentenyl diphosphate biosynthesis via DXP pathway; isopentenyl diphosphate from 1-deoxy-D-xylulose 5-phosphate: step 1/6. Catalyzes the NADPH-dependent rearrangement and reduction of 1-deoxy-D-xylulose-5-phosphate (DXP) to 2-C-methyl-D-erythritol 4-phosphate (MEP). The protein is 1-deoxy-D-xylulose 5-phosphate reductoisomerase of Treponema pallidum (strain Nichols).